The sequence spans 390 residues: Phosphopentomutase (390 aa).

Mn(2+) contacts are provided by aspartate 11, aspartate 283, histidine 288, aspartate 324, histidine 325, and histidine 336.

The protein belongs to the phosphopentomutase family. Requires Mn(2+) as cofactor.

It is found in the cytoplasm. The enzyme catalyses 2-deoxy-alpha-D-ribose 1-phosphate = 2-deoxy-D-ribose 5-phosphate. The catalysed reaction is alpha-D-ribose 1-phosphate = D-ribose 5-phosphate. It participates in carbohydrate degradation; 2-deoxy-D-ribose 1-phosphate degradation; D-glyceraldehyde 3-phosphate and acetaldehyde from 2-deoxy-alpha-D-ribose 1-phosphate: step 1/2. Isomerase that catalyzes the conversion of deoxy-ribose 1-phosphate (dRib-1-P) and ribose 1-phosphate (Rib-1-P) to deoxy-ribose 5-phosphate (dRib-5-P) and ribose 5-phosphate (Rib-5-P), respectively. The sequence is that of Phosphopentomutase from Alkaliphilus oremlandii (strain OhILAs) (Clostridium oremlandii (strain OhILAs)).